Here is a 366-residue protein sequence, read N- to C-terminus: UDP-N-acetylglucosamine--N-acetylmuramyl-(pentapeptide) pyrophosphoryl-undecaprenol N-acetylglucosamine transferase (366 aa).

UDP-N-acetyl-alpha-D-glucosamine-binding positions include 14–16 (TGG), Asn125, Arg168, Ser196, and Gln297.

It belongs to the glycosyltransferase 28 family. MurG subfamily.

The protein localises to the cell inner membrane. It carries out the reaction di-trans,octa-cis-undecaprenyl diphospho-N-acetyl-alpha-D-muramoyl-L-alanyl-D-glutamyl-meso-2,6-diaminopimeloyl-D-alanyl-D-alanine + UDP-N-acetyl-alpha-D-glucosamine = di-trans,octa-cis-undecaprenyl diphospho-[N-acetyl-alpha-D-glucosaminyl-(1-&gt;4)]-N-acetyl-alpha-D-muramoyl-L-alanyl-D-glutamyl-meso-2,6-diaminopimeloyl-D-alanyl-D-alanine + UDP + H(+). Its pathway is cell wall biogenesis; peptidoglycan biosynthesis. In terms of biological role, cell wall formation. Catalyzes the transfer of a GlcNAc subunit on undecaprenyl-pyrophosphoryl-MurNAc-pentapeptide (lipid intermediate I) to form undecaprenyl-pyrophosphoryl-MurNAc-(pentapeptide)GlcNAc (lipid intermediate II). This Rhodopseudomonas palustris (strain ATCC BAA-98 / CGA009) protein is UDP-N-acetylglucosamine--N-acetylmuramyl-(pentapeptide) pyrophosphoryl-undecaprenol N-acetylglucosamine transferase.